We begin with the raw amino-acid sequence, 311 residues long: Fructose-1,6-bisphosphatase class 1 (311 aa).

Residues Glu-90, Asp-110, Leu-112, and Asp-113 each contribute to the Mg(2+) site. Substrate contacts are provided by residues 113–116 (DGSS), Tyr-221, and Lys-251. Glu-257 serves as a coordination point for Mg(2+).

It belongs to the FBPase class 1 family. As to quaternary structure, homotetramer. Requires Mg(2+) as cofactor.

The protein localises to the cytoplasm. The enzyme catalyses beta-D-fructose 1,6-bisphosphate + H2O = beta-D-fructose 6-phosphate + phosphate. Its pathway is carbohydrate biosynthesis; gluconeogenesis. The polypeptide is Fructose-1,6-bisphosphatase class 1 (Methanospirillum hungatei JF-1 (strain ATCC 27890 / DSM 864 / NBRC 100397 / JF-1)).